The following is a 533-amino-acid chain: Ribonuclease III domain-containing protein RNC1, chloroplastic (533 aa).

Residues methionine 1 to arginine 30 constitute a chloroplast transit peptide. Disordered stretches follow at residues valine 31–serine 57 and arginine 66–proline 85. A compositionally biased stretch (pro residues) spans threonine 39–alanine 53. The span at alanine 69 to isoleucine 82 shows a compositional bias: basic residues. RNase III domains follow at residues leucine 164–glycine 279 and glutamate 411–glycine 511.

Interacts with RNA. Part of large ribonucleo-protein particles that contain CAF1 and/or CAF2.

Its subcellular location is the plastid. The protein resides in the chloroplast. Its function is as follows. Binds specific group II introns in chloroplasts and facilitates their splicing. Acts on both subgroup IIA and subgroup IIB introns. The substrates of the subgroup II also require the CRM domain proteins CAF1 or CAF2. Binds both single-stranded and double-stranded RNA non-specifically, but lacks endonuclease activity. Required for plastid ribosome biogenesis. In Oryza sativa subsp. japonica (Rice), this protein is Ribonuclease III domain-containing protein RNC1, chloroplastic.